Consider the following 545-residue polypeptide: Chaperonin GroEL (545 aa).

Residues 30 to 33 (TLGP), K51, 87 to 91 (DGTTT), G415, and D495 each bind ATP.

Belongs to the chaperonin (HSP60) family. Forms a cylinder of 14 subunits composed of two heptameric rings stacked back-to-back. Interacts with the co-chaperonin GroES.

The protein resides in the cytoplasm. It carries out the reaction ATP + H2O + a folded polypeptide = ADP + phosphate + an unfolded polypeptide.. Together with its co-chaperonin GroES, plays an essential role in assisting protein folding. The GroEL-GroES system forms a nano-cage that allows encapsulation of the non-native substrate proteins and provides a physical environment optimized to promote and accelerate protein folding. The protein is Chaperonin GroEL of Shewanella baltica (strain OS185).